Consider the following 89-residue polypeptide: HssA/B-like protein 14 (89 aa).

It belongs to the hssA/B family.

The polypeptide is HssA/B-like protein 14 (hssl14) (Dictyostelium discoideum (Social amoeba)).